Consider the following 616-residue polypeptide: MAU2 chromatid cohesion factor homolog (616 aa).

TPR repeat units follow at residues 90–123, 445–478, and 485–518; these read FDTASLLAQLYQQQEQSSLAKPVLRKAIELSQHN, GSFYYVQGLNAFHKSSFHEAKRFLRETLKMANAE, and SCSLVLLSHVFLSIGNSKESMNMVTPAMQLASKI.

This sequence belongs to the SCC4/mau-2 family. As to quaternary structure, component of the cohesin loading complex.

Its subcellular location is the nucleus. It localises to the nucleoplasm. In terms of biological role, required for association of the cohesin complex with chromatin during interphase. Plays a role in sister chromatid cohesion and normal progression through prometaphase. This is MAU2 chromatid cohesion factor homolog from Culex quinquefasciatus (Southern house mosquito).